The sequence spans 199 residues: Recombination protein RecR (199 aa).

A C4-type zinc finger spans residues 57 to 72 (CSICGNITEGDPCSIC). Residues 80 to 176 (THVLVVEQPK…KVTRLAHGLS (97 aa)) form the Toprim domain.

This sequence belongs to the RecR family.

Its function is as follows. May play a role in DNA repair. It seems to be involved in an RecBC-independent recombinational process of DNA repair. It may act with RecF and RecO. This is Recombination protein RecR from Levilactobacillus brevis (strain ATCC 367 / BCRC 12310 / CIP 105137 / JCM 1170 / LMG 11437 / NCIMB 947 / NCTC 947) (Lactobacillus brevis).